The chain runs to 468 residues: ATP synthase subunit beta (468 aa).

ATP is bound at residue 155–162 (GGAGVGKT).

This sequence belongs to the ATPase alpha/beta chains family. As to quaternary structure, F-type ATPases have 2 components, CF(1) - the catalytic core - and CF(0) - the membrane proton channel. CF(1) has five subunits: alpha(3), beta(3), gamma(1), delta(1), epsilon(1). CF(0) has three main subunits: a(1), b(2) and c(9-12). The alpha and beta chains form an alternating ring which encloses part of the gamma chain. CF(1) is attached to CF(0) by a central stalk formed by the gamma and epsilon chains, while a peripheral stalk is formed by the delta and b chains.

The protein localises to the cell membrane. It catalyses the reaction ATP + H2O + 4 H(+)(in) = ADP + phosphate + 5 H(+)(out). Functionally, produces ATP from ADP in the presence of a proton gradient across the membrane. The catalytic sites are hosted primarily by the beta subunits. The sequence is that of ATP synthase subunit beta from Streptococcus pneumoniae (strain ATCC BAA-255 / R6).